Reading from the N-terminus, the 562-residue chain is Putative transport protein YE1478 (562 aa).

Helical transmembrane passes span 8–28 (LLNG…LCLG), 32–52 (LGPI…LLGQ), 66–86 (FMLF…SIFF), 94–114 (MLAL…GKLF), 118–138 (IGLT…LVGA), and 158–178 (NLSL…ILGA). RCK C-terminal domains follow at residues 202-288 (LDTD…SFRN) and 290-373 (KEVF…KIGF). The next 5 helical transmembrane spans lie at 383-403 (LLAF…TFQF), 406-426 (FSFG…LGFL), 447-467 (FGLM…INSS), 475-495 (MLIS…IFGA), and 541-561 (IANV…PGIL).

The protein belongs to the AAE transporter (TC 2.A.81) family. YbjL subfamily.

The protein localises to the cell membrane. The sequence is that of Putative transport protein YE1478 from Yersinia enterocolitica serotype O:8 / biotype 1B (strain NCTC 13174 / 8081).